We begin with the raw amino-acid sequence, 95 residues long: Small ubiquitin-related modifier 2 (95 aa).

Lys11 is covalently cross-linked (Glycyl lysine isopeptide (Lys-Gly) (interchain with G-Cter in SUMO)). The Ubiquitin-like domain maps to 16 to 95; sequence DHINLKVAGQ…VFQQQTGGSF (80 aa). Gly93 participates in a covalent cross-link: Glycyl lysine isopeptide (Gly-Lys) (interchain with K-? in acceptor proteins). Residues 94–95 constitute a propeptide that is removed on maturation; sequence SF.

It belongs to the ubiquitin family. SUMO subfamily. In terms of assembly, interacts with sae2 and ube2i. Covalently attached to a number of proteins, including top2. In terms of processing, polymeric chains can be formed through Lys-11 cross-linking. Cleavage of precursor form by a sentrin-specific protease is necessary for function.

The protein resides in the nucleus. In terms of biological role, ubiquitin-like protein that can be covalently attached to proteins as a monomer or as a lysine-linked polymer. Covalent attachment via an isopeptide bond to its substrates requires prior activation by the E1 complex sae1-sae2 and linkage to the E2 enzyme ube2i, and can be promoted by an E3 ligase such as pias1-4. This post-translational modification on lysine residues of proteins plays a crucial role in a number of cellular processes such as nuclear transport, DNA replication and repair, mitosis and signal transduction. Polymeric sumo2 chains are also susceptible to polyubiquitination which functions as a signal for proteasomal degradation of modified proteins. The protein is Small ubiquitin-related modifier 2 (sumo2) of Xenopus tropicalis (Western clawed frog).